A 296-amino-acid chain; its full sequence is Cytidine deaminase (296 aa).

CMP/dCMP-type deaminase domains follow at residues 47–167 and 186–296; these read AESE…FGPS and DSSD…LDPE. 88-90 is a substrate binding site; the sequence is NME. His-101 contacts Zn(2+). Glu-103 acts as the Proton donor in catalysis. Cys-128 and Cys-131 together coordinate Zn(2+).

This sequence belongs to the cytidine and deoxycytidylate deaminase family. As to quaternary structure, homodimer. Zn(2+) serves as cofactor.

It carries out the reaction cytidine + H2O + H(+) = uridine + NH4(+). The catalysed reaction is 2'-deoxycytidine + H2O + H(+) = 2'-deoxyuridine + NH4(+). This enzyme scavenges exogenous and endogenous cytidine and 2'-deoxycytidine for UMP synthesis. This is Cytidine deaminase from Shewanella sediminis (strain HAW-EB3).